The following is a 256-amino-acid chain: Pimeloyl-[acyl-carrier protein] methyl ester esterase (256 aa).

Residues 15 to 242 (HLVLLHGWGL…AAHAPFISHP (228 aa)) form the AB hydrolase-1 domain. Residues W22, 82 to 83 (SL), and 143 to 147 (FLALQ) contribute to the substrate site. The active-site Nucleophile is the S82. Active-site residues include D207 and H235. Residue H235 participates in substrate binding.

Belongs to the AB hydrolase superfamily. Carboxylesterase BioH family. In terms of assembly, monomer.

The protein localises to the cytoplasm. It catalyses the reaction 6-carboxyhexanoyl-[ACP] methyl ester + H2O = 6-carboxyhexanoyl-[ACP] + methanol + H(+). It functions in the pathway cofactor biosynthesis; biotin biosynthesis. In terms of biological role, the physiological role of BioH is to remove the methyl group introduced by BioC when the pimeloyl moiety is complete. It allows to synthesize pimeloyl-ACP via the fatty acid synthetic pathway through the hydrolysis of the ester bonds of pimeloyl-ACP esters. The polypeptide is Pimeloyl-[acyl-carrier protein] methyl ester esterase (Salmonella choleraesuis (strain SC-B67)).